We begin with the raw amino-acid sequence, 320 residues long: Flavonol 4'-sulfotransferase (320 aa).

69-74 serves as a coordination point for 3'-phosphoadenylyl sulfate; that stretch reads KSGTTW. Histidine 129 acts as the Proton acceptor in catalysis. 3'-phosphoadenylyl sulfate contacts are provided by residues arginine 151, serine 159, tyrosine 217, and 285–287; that span reads RKA.

It belongs to the sulfotransferase 1 family. As to expression, highest in shoot tips and lowest in mature leaves and roots.

It localises to the cytoplasm. The enzyme catalyses quercetin 3-sulfate + 3'-phosphoadenylyl sulfate = quercetin 3,4'-bissulfate + adenosine 3',5'-bisphosphate + H(+). Its activity is regulated as follows. No requirement for divalent cations and insensitive to p-chloromercuribenzoate, iodoacetate, or iodoacetamide. In terms of biological role, sulfotransferase that utilizes 3'-phospho-5'-adenylyl sulfate (PAPS) as sulfonate donor to catalyze the sulfate conjugation of quercetin 3-sulfate &gt; kaempferol 3-sulfate &gt; isorhamnetin 3-sulfate &gt; patuletin 3-sulfate, but not tamarixetin 3-sulfate. O-sulfation of position 4' of flavonol. May play a role in auxin transport. The polypeptide is Flavonol 4'-sulfotransferase (Flaveria chlorifolia (Clasping yellowtops)).